We begin with the raw amino-acid sequence, 589 residues long: MPTISCDKEELYKALGREYTTQEFDELCFQFGIELDEDTTNDPERSPSERPSLKIDIPANRYDMLCLEGIAQALNVFNRRMATPQYKLLPSTTSLTISPETSEIRPYAAAAILRGVKLDPIRYQSFIALQDKLHANLCRNRTLVAIGTHDFSVMEGPFTYEALKPEEINFVPLNQTQEINGSNLLEFYKDSKHLSRYLHIIANSPRYPVILDAKRRVCSLPPIINSEFSKISVDTRDIFIDVTATDKTKLEIVVNMMTTMFSCYCEEPFTIEPVNIISEHNGCTRVTPNLNPTCFKADIDYLNEACGLSLPEDEICHLLTRMMLTAKPNPNDSKTLLVYVPPLRADILHQCDIMEDLGIAYGYDNLKHTYPAHSVTFGKPFEVNRLADIIRNEVAYAGWSEVMPFILCSHDENYAWLRKTDDSKAVQLANPKTLEFQVVRSSLLPGILKTVRENKNHALPIKIFEVSDVAFCDYSRERMTRNERHLCAIFAGLNSGFEQIHGLLDRVMLMLNTKRIMNPKDSDAVGYWIEAEDDSTFFPGRCAAVYYRKDFGTAGIRVGVFGVLHPLVLEKFELTSAASAVEIDLTLWV.

In terms of domain architecture, B5 spans 290–368 (LNPTCFKADI…IAYGYDNLKH (79 aa)). Mg(2+)-binding residues include Asp-346, Asp-352, Glu-355, and Asp-356.

Belongs to the phenylalanyl-tRNA synthetase beta subunit family. Type 2 subfamily. Tetramer of two alpha and two beta subunits. Requires Mg(2+) as cofactor.

It localises to the cytoplasm. Its subcellular location is the nucleus. The enzyme catalyses tRNA(Phe) + L-phenylalanine + ATP = L-phenylalanyl-tRNA(Phe) + AMP + diphosphate + H(+). This Schizosaccharomyces pombe (strain 972 / ATCC 24843) (Fission yeast) protein is Phenylalanine--tRNA ligase beta subunit (frs1).